Consider the following 663-residue polypeptide: Inner nuclear membrane protein HEH2 (663 aa).

Disordered stretches follow at residues 46-188 and 267-289; these read QRLQ…ELPN and ISET…KNIR. The segment covering 47-62 has biased composition (polar residues); the sequence is RLQSSPEASKVRTSIQ. The segment covering 91–123 has biased composition (basic and acidic residues); it reads KTVKDENVETNKRKREQISTDNEAKMQIQEEKS. At serine 123 the chain carries Phosphoserine. Over residues 124-134 the composition is skewed to basic residues; it reads PKKKRKKRSSK. The short motif at 124–137 is the Nuclear localization signal element; the sequence is PKKKRKKRSSKANK. A compositionally biased stretch (basic and acidic residues) spans 164 to 183; that stretch reads EELHKKDSSDDKPRVKELPK. Residues 317–337 traverse the membrane as a helical segment; it reads LFIWLWNGAIFLSIICPILFG.

Interacts with SRP1.

Its subcellular location is the nucleus inner membrane. This is Inner nuclear membrane protein HEH2 (HEH2) from Saccharomyces cerevisiae (strain ATCC 204508 / S288c) (Baker's yeast).